A 471-amino-acid polypeptide reads, in one-letter code: Siroheme synthase 1 (471 aa).

Residues 1–203 (MDYLPLFAEL…GNSAEAEKAL (203 aa)) form a precorrin-2 dehydrogenase /sirohydrochlorin ferrochelatase region. NAD(+) contacts are provided by residues 22 to 23 (EI) and 43 to 44 (ET). Phosphoserine is present on serine 128. The interval 215–471 (GEIILVGAGP…GFNASVVNLA (257 aa)) is uroporphyrinogen-III C-methyltransferase. Proline 224 contributes to the S-adenosyl-L-methionine binding site. Aspartate 247 functions as the Proton acceptor in the catalytic mechanism. The Proton donor role is filled by lysine 269. S-adenosyl-L-methionine contacts are provided by residues 300–302 (GGD), isoleucine 305, 330–331 (TA), methionine 382, and glycine 411.

It in the N-terminal section; belongs to the precorrin-2 dehydrogenase / sirohydrochlorin ferrochelatase family. The protein in the C-terminal section; belongs to the precorrin methyltransferase family.

It carries out the reaction uroporphyrinogen III + 2 S-adenosyl-L-methionine = precorrin-2 + 2 S-adenosyl-L-homocysteine + H(+). The catalysed reaction is precorrin-2 + NAD(+) = sirohydrochlorin + NADH + 2 H(+). The enzyme catalyses siroheme + 2 H(+) = sirohydrochlorin + Fe(2+). It functions in the pathway cofactor biosynthesis; adenosylcobalamin biosynthesis; precorrin-2 from uroporphyrinogen III: step 1/1. It participates in cofactor biosynthesis; adenosylcobalamin biosynthesis; sirohydrochlorin from precorrin-2: step 1/1. Its pathway is porphyrin-containing compound metabolism; siroheme biosynthesis; precorrin-2 from uroporphyrinogen III: step 1/1. The protein operates within porphyrin-containing compound metabolism; siroheme biosynthesis; siroheme from sirohydrochlorin: step 1/1. It functions in the pathway porphyrin-containing compound metabolism; siroheme biosynthesis; sirohydrochlorin from precorrin-2: step 1/1. Its function is as follows. Multifunctional enzyme that catalyzes the SAM-dependent methylations of uroporphyrinogen III at position C-2 and C-7 to form precorrin-2 via precorrin-1. Then it catalyzes the NAD-dependent ring dehydrogenation of precorrin-2 to yield sirohydrochlorin. Finally, it catalyzes the ferrochelation of sirohydrochlorin to yield siroheme. This chain is Siroheme synthase 1, found in Klebsiella pneumoniae subsp. pneumoniae (strain ATCC 700721 / MGH 78578).